A 142-amino-acid chain; its full sequence is MFQGASSLSLDAKGRLSVPTRHRDALTAQAGGQLTLTKHPDGCLMVFPRPEWEKFRERIAQLPMSAQWWKRIFLGNAMDVEMDGTGRVLVSPELREAAGLSKDAILLGMGNHFELWDKATYEAKEAAAMQAEMPDVFKDFSF.

SpoVT-AbrB domains follow at residues 5-51 (ASSL…PRPE) and 77-120 (AMDV…DKAT).

The protein belongs to the MraZ family. In terms of assembly, forms oligomers.

The protein localises to the cytoplasm. It localises to the nucleoid. In Acidovorax ebreus (strain TPSY) (Diaphorobacter sp. (strain TPSY)), this protein is Transcriptional regulator MraZ.